Here is a 145-residue protein sequence, read N- to C-terminus: MKGLIQRVRHARVEVAGEIVGAIDQGLLVLVGVEREDDQARADKLLHKLLNYRVFGDEQGKMNRSLKDIGGGLLLVSQFTLAADTRSGLRPSFSSAAPPAHGEALYDYLLARARDQHPEVACGRFGAEMQVHLVNDGPVTFLLES.

A Gly-cisPro motif, important for rejection of L-amino acids motif is present at residues 137-138; sequence GP.

It belongs to the DTD family. In terms of assembly, homodimer.

It is found in the cytoplasm. It carries out the reaction glycyl-tRNA(Ala) + H2O = tRNA(Ala) + glycine + H(+). The catalysed reaction is a D-aminoacyl-tRNA + H2O = a tRNA + a D-alpha-amino acid + H(+). Functionally, an aminoacyl-tRNA editing enzyme that deacylates mischarged D-aminoacyl-tRNAs. Also deacylates mischarged glycyl-tRNA(Ala), protecting cells against glycine mischarging by AlaRS. Acts via tRNA-based rather than protein-based catalysis; rejects L-amino acids rather than detecting D-amino acids in the active site. By recycling D-aminoacyl-tRNA to D-amino acids and free tRNA molecules, this enzyme counteracts the toxicity associated with the formation of D-aminoacyl-tRNA entities in vivo and helps enforce protein L-homochirality. This is D-aminoacyl-tRNA deacylase from Stutzerimonas stutzeri (strain A1501) (Pseudomonas stutzeri).